The primary structure comprises 265 residues: Undecaprenyl-diphosphatase (265 aa).

Helical transmembrane passes span 42–62, 82–102, 108–128, 143–163, 181–201, 221–241, and 248–264; these read ATTFEVAIQLGAILAVVVLYW, GIMLLLLTSLPASVLGLAAHS, LFTPSTVAIALAVGAIFMLLV, MSPALALGIGCFQCLALWPGF, GLAAEYSFIAAVPIMFAATGY, GFVVSFLSAWAAVKLFIALVG, and FAWYRLAIAPLVYYFMA.

The protein belongs to the UppP family.

It is found in the cell inner membrane. The catalysed reaction is di-trans,octa-cis-undecaprenyl diphosphate + H2O = di-trans,octa-cis-undecaprenyl phosphate + phosphate + H(+). Catalyzes the dephosphorylation of undecaprenyl diphosphate (UPP). Confers resistance to bacitracin. In Nitratidesulfovibrio vulgaris (strain ATCC 29579 / DSM 644 / CCUG 34227 / NCIMB 8303 / VKM B-1760 / Hildenborough) (Desulfovibrio vulgaris), this protein is Undecaprenyl-diphosphatase.